Reading from the N-terminus, the 391-residue chain is NADH-quinone oxidoreductase subunit D (391 aa).

This sequence belongs to the complex I 49 kDa subunit family. NDH-1 is composed of 14 different subunits. Subunits NuoB, C, D, E, F, and G constitute the peripheral sector of the complex.

It localises to the cell inner membrane. The enzyme catalyses a quinone + NADH + 5 H(+)(in) = a quinol + NAD(+) + 4 H(+)(out). NDH-1 shuttles electrons from NADH, via FMN and iron-sulfur (Fe-S) centers, to quinones in the respiratory chain. The immediate electron acceptor for the enzyme in this species is believed to be ubiquinone. Couples the redox reaction to proton translocation (for every two electrons transferred, four hydrogen ions are translocated across the cytoplasmic membrane), and thus conserves the redox energy in a proton gradient. This Rickettsia conorii (strain ATCC VR-613 / Malish 7) protein is NADH-quinone oxidoreductase subunit D.